A 659-amino-acid polypeptide reads, in one-letter code: Protein phosphatase Slingshot homolog 3 (659 aa).

The span at 1–16 (MALVTVSRSPPGSGAS) shows a compositional bias: polar residues. The segment at 1–31 (MALVTVSRSPPGSGASTPVGPWDQAVQRRSR) is disordered. Ala2 is modified (N-acetylalanine). Phosphoserine is present on residues Ser9 and Ser37. The disordered stretch occupies residues 46-96 (LGLQDGGDNDDAAEASSEPTEKAPSEEELHGDQTDFGQGSQSPQKQEEQRQ). The span at 64 to 78 (PTEKAPSEEELHGDQ) shows a compositional bias: basic and acidic residues. Positions 80-89 (DFGQGSQSPQ) are enriched in polar residues. A phosphoserine mark is found at Ser85 and Ser87. One can recognise a DEK-C domain in the interval 269-324 (EQMEQAIRAELWKVLDVSDLESVTSKEIRQALELRLGLPLQQYRDFIDNQMLLLVA). The 142-residue stretch at 328-469 (RASRIFPHLY…LQIYQGILTA (142 aa)) folds into the Tyrosine-protein phosphatase domain. Cys413 functions as the Phosphocysteine intermediate in the catalytic mechanism. Disordered regions lie at residues 482-534 (GVSP…RINL), 547-603 (SLEL…RQSV), and 617-638 (QAFQEQEQGQGQGQGEPCISST). Positions 547–557 (SLELESTSETS) are enriched in low complexity.

Belongs to the protein-tyrosine phosphatase family. As to quaternary structure, does not bind to, or colocalize with, filamentous actin.

The protein resides in the cytoplasm. The protein localises to the cytoskeleton. It is found in the nucleus. It carries out the reaction O-phospho-L-tyrosyl-[protein] + H2O = L-tyrosyl-[protein] + phosphate. The catalysed reaction is O-phospho-L-seryl-[protein] + H2O = L-seryl-[protein] + phosphate. The enzyme catalyses O-phospho-L-threonyl-[protein] + H2O = L-threonyl-[protein] + phosphate. Functionally, protein phosphatase which may play a role in the regulation of actin filament dynamics. Can dephosphorylate and activate the actin binding/depolymerizing factor cofilin, which subsequently binds to actin filaments and stimulates their disassembly. The protein is Protein phosphatase Slingshot homolog 3 (SSH3) of Homo sapiens (Human).